The primary structure comprises 389 residues: Arrestin-C (389 aa).

Belongs to the arrestin family. As to expression, retina and pineal gland.

In terms of biological role, may play a role in an as yet undefined retina-specific signal transduction. Could bind to photoactivated-phosphorylated red/green opsins. The protein is Arrestin-C (arr3) of Aquarana catesbeiana (American bullfrog).